Consider the following 334-residue polypeptide: Anthranilate phosphoribosyltransferase (334 aa).

5-phospho-alpha-D-ribose 1-diphosphate-binding positions include glycine 79, 82 to 83 (GD), serine 87, 89 to 92 (NIST), 107 to 115 (KHGNRSISS), and serine 119. Glycine 79 lines the anthranilate pocket. Serine 91 lines the Mg(2+) pocket. Residue asparagine 110 participates in anthranilate binding. Residue arginine 165 coordinates anthranilate. Residues aspartate 224 and glutamate 225 each contribute to the Mg(2+) site.

It belongs to the anthranilate phosphoribosyltransferase family. In terms of assembly, homodimer. Mg(2+) serves as cofactor.

It catalyses the reaction N-(5-phospho-beta-D-ribosyl)anthranilate + diphosphate = 5-phospho-alpha-D-ribose 1-diphosphate + anthranilate. It participates in amino-acid biosynthesis; L-tryptophan biosynthesis; L-tryptophan from chorismate: step 2/5. Catalyzes the transfer of the phosphoribosyl group of 5-phosphorylribose-1-pyrophosphate (PRPP) to anthranilate to yield N-(5'-phosphoribosyl)-anthranilate (PRA). The protein is Anthranilate phosphoribosyltransferase of Streptococcus gordonii (strain Challis / ATCC 35105 / BCRC 15272 / CH1 / DL1 / V288).